The primary structure comprises 342 residues: MESIAKAKSLPNKGRTYDSQRPWNRDSPFSFAAWWSTPSTRYLKVDQPSGRDEHDSLDLEDEDVSNYLASHRERQKRRASCAAKAKVLIIGCAVISLFAIIGALGFALGRRATLPGSCASPAHQNPHTPPHPRPTKGEAHDAGHSGSHSSSSSTNNHHHSHDDSPPPPHVGIDKPKQCGESPDEAQSRGCIFEPQLTAWVAPECAFPAVVAEYQDAVGDMMTEWPWFWDTGLQKAVSPEEFPSLQAGNYSVVYTPYQASHALHCLYCWRKVSYALEHGVDWMDARCHQFYHQRHCAFFIADKLLEMEDWRAAAEVDVQGRLTTWTYPLLYHNCVPLSSTMES.

The segment at 1-22 (MESIAKAKSLPNKGRTYDSQRP) is disordered. A helical transmembrane segment spans residues 87–107 (VLIIGCAVISLFAIIGALGFA). The segment at 118–186 (CASPAHQNPH…QCGESPDEAQ (69 aa)) is disordered. The segment covering 144–155 (HSGSHSSSSSTN) has biased composition (low complexity). The N-linked (GlcNAc...) asparagine glycan is linked to Asn-248.

The protein resides in the membrane. Functionally, part of the gene cluster that mediates the biosynthesis of the phomopsins, a group of hexapeptide mycotoxins which infects lupins and causes lupinosis disease in livestock. The role of phomB' within the phomopsins biosynthesis pathway has still to be determined. The pathway starts with the processing of the precursor phomA by several endopeptidases including kexin proteases as well as the cluster-specific S41 family peptidase phomP1 and the oligopeptidase phomG to produce 10 identical copies of the hexapeptide Tyr-Val-Ile-Pro-Ile-Asp. After being excised from the precursor peptide, the core peptides are cyclized and modified post-translationally by enzymes encoded within the gene cluster. The timing and order of proteolysis of the phomA precursor and PTMs are still unknown. Two tyrosinase-like enzymes, phomQ1 and phomQ2, catalyze the chlorination and hydroxylation of Tyr, respectively. PhomYb, is proposed to be involved in the construction of the macrocyclic structure. The other 4 ustYa family proteins may be involved in PTMs that generate the unique structure of phomopsin A. PhomYa is required for the hydroxylation of C-beta of Tyr. PhomYc, phomYd, and phomYe are responsible for the biosynthesis of 2,3-dehydroisoleucine (dIle), 2,3-dehydroaspartic acid (dAsp), and 3,4-dehydroproline (dPro), respectively. While dIle formation by phomYc is indispensable for the installation of dAsp by phomYd, the order of the other PTMs have not been elucidated yet. Most of the biosynthetic enzymes likely have broad substrate specificity, and thus, there might be a metabolic grid from a precursor to phomopsin A. The enzyme(s) responsible for the biosynthesis of 3,4-dehydrovaline (dVal) have also not been identified yet. Finally, phomM acts as an S-adenosylmethionine-dependent alpha-N-methyltransferase that catalyzes two successive N-methylation reactions, converting N-desmethyl-phomopsin A to phomopsin A and phomopsin A further to an N,N-dimethylated congener called phomopsin E. The polypeptide is Phomopsin biosynthesis cluster protein B' (Diaporthe leptostromiformis (Lupinosis disease fungus)).